Reading from the N-terminus, the 176-residue chain is Large ribosomal subunit protein uL10 (176 aa).

This sequence belongs to the universal ribosomal protein uL10 family. In terms of assembly, part of the ribosomal stalk of the 50S ribosomal subunit. The N-terminus interacts with L11 and the large rRNA to form the base of the stalk. The C-terminus forms an elongated spine to which L12 dimers bind in a sequential fashion forming a multimeric L10(L12)X complex.

Functionally, forms part of the ribosomal stalk, playing a central role in the interaction of the ribosome with GTP-bound translation factors. The sequence is that of Large ribosomal subunit protein uL10 from Saccharophagus degradans (strain 2-40 / ATCC 43961 / DSM 17024).